The following is a 2195-amino-acid chain: MTPEAKKRKNQKKKLKQKQKKAAEKAASHSEEPLELPESTINSSFNDDSVNRTESDIASKSDVPPVSSSTNISPANETQLEIPDTQELHHKLLNDSDQHDITADSNDLPDNSIVEHDSVITQTKPAMSQEYEETAAHLSSRNPSLDVVAGELHNNNEHTQKIAVSAVEEDSFNEEEGENHDSIIISSLNDATPSQYNHFLPSDGNLLSPELSSGDTPTHNVPLGTKDNEINDDEYCNDKEISLNANNVLPDELSKEEDERLKLETHVSTEEKKQDIADQETAENLFTSSTEPSENKIRNSGDDTSMLFQDDESDQKVPWEEDVKKDFHNENTNNTQESAPNTDDRDKGYEGNEALKKSESCTAADERSYSEETSEDIFHGHDKQVVEGQNDFTGKNIENESQKLMGEGNHKLPLSAEADIIEPGKDIQDQAEDLFTQSSGDLGEVLPWESTDKNADVTSKSQEKHEDLFAASGNDEKLPWEVSDGEVSSGKTENSMQTSTEKIAEQKFSFLENDDDLLDDDDSFLASSEEEDTVPNTDNTTNLTSKPVEEKKASRYKPIIEEEAGMRQEQVHFTNTTGIVTPQQFHGLTKTGLGTPNQQVSVPNIVSPKPPVVKDNRSNFKINEEKKKSDAYDFPLEIISESSKKGHAKPVAVPTQRFGSGNSFSSLDKPIPQSRKGSNNSNRPPVIPLGTQEPRSSRTNSAISQSPVNYAFPNPYKIQQLQQAPIQSGMPLPNTNIPPPALKVETTVSAPPIRARGVSNASVGSSASFGARHATQYGLNNGVPPVSPYGQATINLPTANKYAPVSPTVQQKQYPSVVQNLGASAVNTPNFVKTHRGHTSSISSYTPNQNEHASRYAPNYQQSYQVPYTSQPVGPVAGNSSYQSQTRSSYAVPMMPQAQTSASIQPHANIQPPTGILPLAPLRPLDPLQAATNLQPRASNITAANSLPLANLPLAENILPEIITHRATSSVAPPRQENNPIKIDNEALLRRQFPIFHWSAANKVVYAVPPIPDQSQYMISSSIVQEIKVTPIDQIIKPNDMLKSFPGPLGSAKLKKKDLTKWMETTIKSISENESSTDMTIWQLLEMKLNDKVNWKNISKLLYNSDELLMYLSQPFPNGDMIPNAYRLDINCQMRVLAFLQTGNHDEALRLALSKRDYAIALLVGSLMGKDRWSEVIQKYLYEGFTAGPNDQKELAHFLLLIFQVFVGNSKMAIKSFYTNNETSQWASENWKSIVAAVLINIPENNEDPLLIPPVVLEFLIEFGIFLTKKGLTAAASTLFIIGNVPLSNEPVMADSDVIFESIGNMNTFESILWDEIYEYIFSYDPKFKGFSSILPQKIYHASLLQEQGLNSLGTKYTDYLSSSVRKLPKKDILTINLTRELSEVASRLSESNTGWLAKPKLSSVWGQLDKSFNKYIGGDDIDALNKKNDKKKVFDGFTPGSSANSSTVDLTQTFTPFQAQVTSQSYVDTTALLHNAHNVPSHSVLHSKPSNVSKGLVEANLPYTHRIGDSLQGSPQRIHNTQFAAAEPQMASLRRVRTDQHTNEKALKSQQILEKKSTAYTPQFGQNHSVPMEKSNSNVPSLFADFPAPPKLGTVPSNYVSSPDLVRRESIISTGSEFLPPPKIGVPTKANSSQGSLMYSPSVEALPIDPVVPQVHETGYNDFGNKHSQKSMPEDESHTSHDNSNADQNTLKDSADVTDETMDIEGPGFNDVKNLLPMEPNHQPTSTVNPIQTISDDIQPILQTNVEVRGTDASKMENSLPSIENERSSEEQPENISKSASSAYLPSTGGLSLENRPLTQDENSISETVQSTYLPAGSISMEAKPISQVQDVPRNVNNKASKLVEQHMAPPKPKSTDATKMNYSPYVPQSTAASADGDESTILKTSPAIYARTHQAHASNPSQYFPLVNQANETASFELSESTSQAQSNGNVASENRFSPIKKAEVVEKDTFQPTIRKASTNQYRAFKPLESDADKYNDVIEDESDDDNMSTDEAKNRKEEKKNVNMKKETKPSNKDIDDKSNGWFGWLKKDTGDKKVYKAKLGHKNTLYYDEKLKRWVNKDATEEEKQKIIESSAPPPPPIVKRKDGGPKTKPRSGPINNSLPPVHATSVIPNNPITGEPLPIKTSPSPTGPNPNNSPSPSSPISRISGVNLTSKKANGLDDLLSLAGGPKPASTRRKKKTARGYVNVMDNIQ.

Basic residues predominate over residues 1-20; that stretch reads MTPEAKKRKNQKKKLKQKQK. The segment at 1–112 is disordered; the sequence is MTPEAKKRKN…ADSNDLPDNS (112 aa). Basic and acidic residues-rich tracts occupy residues 21–32 and 49–59; these read KAAEKAASHSEE and SVNRTESDIAS. Residue Ser28 is modified to Phosphoserine. Polar residues predominate over residues 66–79; sequence VSSSTNISPANETQ. Position 73 is a phosphoserine (Ser73). Residues 86 to 102 show a composition bias toward basic and acidic residues; sequence QELHHKLLNDSDQHDIT. Ser144 is modified (phosphoserine). Disordered stretches follow at residues 201–233, 247–381, 436–555, 594–616, and 643–708; these read PSDG…INDD, NVLP…FHGH, TQSS…KASR, GTPN…VKDN, and SKKG…QSPV. The segment covering 210 to 219 has biased composition (polar residues); that stretch reads ELSSGDTPTH. A compositionally biased stretch (basic and acidic residues) spans 257-276; that stretch reads EDERLKLETHVSTEEKKQDI. The segment covering 282 to 292 has biased composition (polar residues); the sequence is AENLFTSSTEP. Ser313 is subject to Phosphoserine. Over residues 314-329 the composition is skewed to basic and acidic residues; it reads DQKVPWEEDVKKDFHN. The segment covering 330–341 has biased composition (polar residues); sequence ENTNNTQESAPN. Basic and acidic residues-rich tracts occupy residues 342-381 and 450-479; these read TDDR…FHGH and STDK…EKLP. Residues Ser472 and Ser483 each carry the phosphoserine modification. A compositionally biased stretch (polar residues) spans 489–501; the sequence is SGKTENSMQTSTE. Residues 512–533 are compositionally biased toward acidic residues; sequence ENDDDLLDDDDSFLASSEEEDT. Composition is skewed to polar residues over residues 534–545 and 594–604; these read VPNTDNTTNLTS and GTPNQQVSVPN. Thr595 is modified (phosphothreonine). Residues Ser607, Ser660, Ser663, Ser665, Ser674, Ser678, Ser681, Ser701, Ser704, Ser706, Ser759, Ser762, Ser765, Ser768, Ser843, Ser1511, Ser1515, Ser1578, Ser1602, Ser1603, Ser1611, and Ser1617 each carry the phosphoserine modification. The span at 657–666 shows a compositional bias: polar residues; sequence RFGSGNSFSS. Residues 693–708 are compositionally biased toward polar residues; the sequence is EPRSSRTNSAISQSPV. Disordered regions lie at residues 1656–1731 and 1751–1804; these read VHET…TVNP and GTDA…QDEN. A compositionally biased stretch (basic and acidic residues) spans 1673–1682; the sequence is MPEDESHTSH. Composition is skewed to polar residues over residues 1683-1693 and 1775-1786; these read DNSNADQNTLK and ENISKSASSAYL. A phosphoserine mark is found at Ser1778 and Ser1875. Residues 1917–1936 form a disordered region; it reads SFELSESTSQAQSNGNVASE. Residues Ser1973, Ser1986, and Ser1992 each carry the phosphoserine modification. Positions 1976–2031 are disordered; that stretch reads DKYNDVIEDESDDDNMSTDEAKNRKEEKKNVNMKKETKPSNKDIDDKSNGWFGWLK. The segment covering 1981 to 1992 has biased composition (acidic residues); it reads VIEDESDDDNMS. Residues 1994-2023 show a composition bias toward basic and acidic residues; it reads DEAKNRKEEKKNVNMKKETKPSNKDIDDKS. Thr2049 bears the Phosphothreonine mark. The span at 2054 to 2072 shows a compositional bias: basic and acidic residues; sequence EKLKRWVNKDATEEEKQKI. A disordered region spans residues 2054-2195; the sequence is EKLKRWVNKD…GYVNVMDNIQ (142 aa). Ser2130 is modified (phosphoserine). Positions 2131-2143 are enriched in pro residues; the sequence is PTGPNPNNSPSPS.

The protein belongs to the SEC16 family. In terms of assembly, interacts with SEC23, SEC31 and SED4.

It is found in the endoplasmic reticulum membrane. Functionally, involved in the initiation of assembly of the COPII coat required for the formation of transport vesicles from the endoplasmic reticulum (ER) and the selection of cargo molecules. Also involved in autophagy. In Saccharomyces cerevisiae (strain ATCC 204508 / S288c) (Baker's yeast), this protein is COPII coat assembly protein SEC16 (SEC16).